We begin with the raw amino-acid sequence, 139 residues long: Large ribosomal subunit protein uL16 (139 aa).

Over residues 1 to 17 (MLIPRRTKHRKQHHPRR) the composition is skewed to basic residues. A disordered region spans residues 1–24 (MLIPRRTKHRKQHHPRRTGAASGG).

Belongs to the universal ribosomal protein uL16 family. In terms of assembly, part of the 50S ribosomal subunit.

Binds 23S rRNA and is also seen to make contacts with the A and possibly P site tRNAs. This is Large ribosomal subunit protein uL16 from Beutenbergia cavernae (strain ATCC BAA-8 / DSM 12333 / CCUG 43141 / JCM 11478 / NBRC 16432 / NCIMB 13614 / HKI 0122).